The sequence spans 329 residues: DNA-directed RNA polymerase subunit alpha (329 aa).

The interval 1–235 (MQGSVTEFLK…EQLEAFVDLR (235 aa)) is alpha N-terminal domain (alpha-NTD). The segment at 249–329 (FDPILLRPVD…NWPPASIADE (81 aa)) is alpha C-terminal domain (alpha-CTD).

This sequence belongs to the RNA polymerase alpha chain family. Homodimer. The RNAP catalytic core consists of 2 alpha, 1 beta, 1 beta' and 1 omega subunit. When a sigma factor is associated with the core the holoenzyme is formed, which can initiate transcription.

It catalyses the reaction RNA(n) + a ribonucleoside 5'-triphosphate = RNA(n+1) + diphosphate. DNA-dependent RNA polymerase catalyzes the transcription of DNA into RNA using the four ribonucleoside triphosphates as substrates. The polypeptide is DNA-directed RNA polymerase subunit alpha (Cronobacter sakazakii (strain ATCC BAA-894) (Enterobacter sakazakii)).